The primary structure comprises 266 residues: F-actin-capping protein subunit beta (266 aa).

The protein belongs to the F-actin-capping protein beta subunit family. Component of the F-actin capping complex, composed of a heterodimer of an alpha and a beta subunit.

The protein localises to the cytoplasm. It localises to the cytoskeleton. The protein resides in the actin patch. Its function is as follows. F-actin-capping proteins bind in a Ca(2+)-independent manner to the fast growing ends of actin filaments (barbed end) thereby blocking the exchange of subunits at these ends. Unlike other capping proteins (such as gelsolin and severin), these proteins do not sever actin filaments. The polypeptide is F-actin-capping protein subunit beta (cap2) (Aspergillus oryzae (strain ATCC 42149 / RIB 40) (Yellow koji mold)).